We begin with the raw amino-acid sequence, 492 residues long: GTPase Der (492 aa).

EngA-type G domains follow at residues 3–166 and 205–378; these read PVVA…VDEV and IKLA…DSAT. GTP contacts are provided by residues 9 to 16, 56 to 60, 118 to 121, 211 to 218, 258 to 262, and 323 to 326; these read GRPNVGKS, DTGGI, NKTD, DTAGV, and NKWD. One can recognise a KH-like domain in the interval 379-463; that stretch reads RRVSTAMLTR…PIRIQFKEGE (85 aa).

The protein belongs to the TRAFAC class TrmE-Era-EngA-EngB-Septin-like GTPase superfamily. EngA (Der) GTPase family. Associates with the 50S ribosomal subunit.

In terms of biological role, GTPase that plays an essential role in the late steps of ribosome biogenesis. The protein is GTPase Der of Klebsiella pneumoniae subsp. pneumoniae (strain ATCC 700721 / MGH 78578).